The following is a 437-amino-acid chain: Phosphomethylpyrimidine synthase (437 aa).

Substrate contacts are provided by residues Asn69, Met98, Tyr127, His163, 185 to 187 (SRG), 226 to 229 (DACR), and Glu265. Position 269 (His269) interacts with Zn(2+). Position 292 (Tyr292) interacts with substrate. His333 is a Zn(2+) binding site. 3 residues coordinate [4Fe-4S] cluster: Cys409, Cys412, and Cys416.

It belongs to the ThiC family. Requires [4Fe-4S] cluster as cofactor.

It catalyses the reaction 5-amino-1-(5-phospho-beta-D-ribosyl)imidazole + S-adenosyl-L-methionine = 4-amino-2-methyl-5-(phosphooxymethyl)pyrimidine + CO + 5'-deoxyadenosine + formate + L-methionine + 3 H(+). It participates in cofactor biosynthesis; thiamine diphosphate biosynthesis. Catalyzes the synthesis of the hydroxymethylpyrimidine phosphate (HMP-P) moiety of thiamine from aminoimidazole ribotide (AIR) in a radical S-adenosyl-L-methionine (SAM)-dependent reaction. The polypeptide is Phosphomethylpyrimidine synthase (Alkaliphilus metalliredigens (strain QYMF)).